Consider the following 665-residue polypeptide: Beta-galactosidase LacZ (665 aa).

A substrate-binding site is contributed by Arg110. Residue Cys114 coordinates Zn(2+). Position 148 (Asn148) interacts with substrate. Catalysis depends on Glu149, which acts as the Proton donor. Residues Cys157, Cys159, and Cys162 each contribute to the Zn(2+) site. Catalysis depends on Glu303, which acts as the Nucleophile. Substrate contacts are provided by residues Trp311 and 351 to 354; that span reads EKFH.

It belongs to the glycosyl hydrolase 42 family.

The catalysed reaction is Hydrolysis of terminal non-reducing beta-D-galactose residues in beta-D-galactosides.. This Heyndrickxia coagulans (Weizmannia coagulans) protein is Beta-galactosidase LacZ.